Consider the following 415-residue polypeptide: Serine hydroxymethyltransferase (415 aa).

(6S)-5,6,7,8-tetrahydrofolate-binding positions include L121 and G125–L127. The residue at position 229 (K229) is an N6-(pyridoxal phosphate)lysine. T352–F354 contacts (6S)-5,6,7,8-tetrahydrofolate.

This sequence belongs to the SHMT family. As to quaternary structure, homodimer. Pyridoxal 5'-phosphate is required as a cofactor.

It is found in the cytoplasm. It catalyses the reaction (6R)-5,10-methylene-5,6,7,8-tetrahydrofolate + glycine + H2O = (6S)-5,6,7,8-tetrahydrofolate + L-serine. It functions in the pathway one-carbon metabolism; tetrahydrofolate interconversion. It participates in amino-acid biosynthesis; glycine biosynthesis; glycine from L-serine: step 1/1. Catalyzes the reversible interconversion of serine and glycine with tetrahydrofolate (THF) serving as the one-carbon carrier. This reaction serves as the major source of one-carbon groups required for the biosynthesis of purines, thymidylate, methionine, and other important biomolecules. Also exhibits THF-independent aldolase activity toward beta-hydroxyamino acids, producing glycine and aldehydes, via a retro-aldol mechanism. This Chromobacterium violaceum (strain ATCC 12472 / DSM 30191 / JCM 1249 / CCUG 213 / NBRC 12614 / NCIMB 9131 / NCTC 9757 / MK) protein is Serine hydroxymethyltransferase.